The following is a 633-amino-acid chain: Threonine--tRNA ligase (633 aa).

A TGS domain is found at 1–59 (MIKVTFLAEQKVKEYSGRVTGFDILQPDALREAIAFKVNGELYDLSREIESDTEIEVIQ). The interval 240-532 (DHRKIAKDMD…LIENYAGKFP (293 aa)) is catalytic. Zn(2+)-binding residues include Cys-332, His-383, and His-509.

The protein belongs to the class-II aminoacyl-tRNA synthetase family. In terms of assembly, homodimer. Zn(2+) serves as cofactor.

The protein localises to the cytoplasm. The enzyme catalyses tRNA(Thr) + L-threonine + ATP = L-threonyl-tRNA(Thr) + AMP + diphosphate + H(+). Functionally, catalyzes the attachment of threonine to tRNA(Thr) in a two-step reaction: L-threonine is first activated by ATP to form Thr-AMP and then transferred to the acceptor end of tRNA(Thr). Also edits incorrectly charged L-seryl-tRNA(Thr). In Wolbachia pipientis subsp. Culex pipiens (strain wPip), this protein is Threonine--tRNA ligase.